The primary structure comprises 318 residues: CRISPR-associated endonuclease Cas1 1 (318 aa).

Residues Glu-160, His-225, and Glu-240 each contribute to the Mn(2+) site.

It belongs to the CRISPR-associated endonuclease Cas1 family. Homodimer, forms a heterotetramer with a Cas2 homodimer. It depends on Mg(2+) as a cofactor. Mn(2+) serves as cofactor.

Its function is as follows. CRISPR (clustered regularly interspaced short palindromic repeat), is an adaptive immune system that provides protection against mobile genetic elements (viruses, transposable elements and conjugative plasmids). CRISPR clusters contain spacers, sequences complementary to antecedent mobile elements, and target invading nucleic acids. CRISPR clusters are transcribed and processed into CRISPR RNA (crRNA). Acts as a dsDNA endonuclease. Involved in the integration of spacer DNA into the CRISPR cassette. This is CRISPR-associated endonuclease Cas1 1 from Thermodesulfovibrio yellowstonii (strain ATCC 51303 / DSM 11347 / YP87).